A 130-amino-acid chain; its full sequence is U-scoloptoxin(16)-Er4a (130 aa).

The first 26 residues, 1–26 (MNTVSVVQFLAVGCAVFVLYGRGVFA), serve as a signal peptide directing secretion.

Belongs to the scoloptoxin-16 family. In terms of processing, contains 3 disulfide bonds. In terms of tissue distribution, expressed by the venom gland.

The protein resides in the secreted. This chain is U-scoloptoxin(16)-Er4a, found in Ethmostigmus rubripes (Giant centipede).